A 674-amino-acid polypeptide reads, in one-letter code: Probable L-type lectin-domain containing receptor kinase II.1 (674 aa).

Residues 1-24 (MAGVLGSVVFWLIIGIHVTFLVFA) form the signal peptide. The Extracellular segment spans residues 25-301 (QEGDHFVYYD…PSPKRFPLKE (277 aa)). Positions 28–274 (DHFVYYDFRN…NQYILGWSFK (247 aa)) are legume-lectin like. Residues asparagine 57, asparagine 117, asparagine 133, asparagine 185, asparagine 210, and asparagine 242 are each glycosylated (N-linked (GlcNAc...) asparagine). The helical transmembrane segment at 302 to 322 (VLGATISTIAFLTLGGIVYLY) threads the bilayer. The Cytoplasmic portion of the chain corresponds to 323–674 (KKKKYAEVLE…EDVTVLFGGR (352 aa)). Positions 355–633 (FRENQLLGAG…LEGNVSVPAI (279 aa)) constitute a Protein kinase domain. ATP-binding positions include 361–369 (LGAGGFGKV) and lysine 383. The active-site Proton acceptor is aspartate 480.

The protein in the C-terminal section; belongs to the protein kinase superfamily. Ser/Thr protein kinase family. This sequence in the N-terminal section; belongs to the leguminous lectin family.

It localises to the cell membrane. It carries out the reaction L-seryl-[protein] + ATP = O-phospho-L-seryl-[protein] + ADP + H(+). It catalyses the reaction L-threonyl-[protein] + ATP = O-phospho-L-threonyl-[protein] + ADP + H(+). The chain is Probable L-type lectin-domain containing receptor kinase II.1 (LECRK21) from Arabidopsis thaliana (Mouse-ear cress).